A 131-amino-acid chain; its full sequence is Small ribosomal subunit protein uS8 (131 aa).

This sequence belongs to the universal ribosomal protein uS8 family. In terms of assembly, part of the 30S ribosomal subunit. Contacts proteins S5 and S12.

Its function is as follows. One of the primary rRNA binding proteins, it binds directly to 16S rRNA central domain where it helps coordinate assembly of the platform of the 30S subunit. The sequence is that of Small ribosomal subunit protein uS8 from Zymomonas mobilis subsp. mobilis (strain ATCC 31821 / ZM4 / CP4).